The chain runs to 226 residues: PKHD-type hydroxylase Sde_2812 (226 aa).

Positions 78-178 (KIFPPLFNCY…RLASFFWLQS (101 aa)) constitute a Fe2OG dioxygenase domain. Residues His96, Asp98, and His159 each contribute to the Fe cation site. Arg169 provides a ligand contact to 2-oxoglutarate.

It depends on Fe(2+) as a cofactor. The cofactor is L-ascorbate.

The chain is PKHD-type hydroxylase Sde_2812 from Saccharophagus degradans (strain 2-40 / ATCC 43961 / DSM 17024).